The following is a 236-amino-acid chain: Probable transcriptional regulatory protein UU295 (236 aa).

Belongs to the TACO1 family.

It localises to the cytoplasm. In Ureaplasma parvum serovar 3 (strain ATCC 700970), this protein is Probable transcriptional regulatory protein UU295.